The sequence spans 286 residues: Ribosomal RNA small subunit methyltransferase A (286 aa).

His11, Leu13, Gly44, Glu65, Asp90, and Asn115 together coordinate S-adenosyl-L-methionine.

It belongs to the class I-like SAM-binding methyltransferase superfamily. rRNA adenine N(6)-methyltransferase family. RsmA subfamily.

It is found in the cytoplasm. The enzyme catalyses adenosine(1518)/adenosine(1519) in 16S rRNA + 4 S-adenosyl-L-methionine = N(6)-dimethyladenosine(1518)/N(6)-dimethyladenosine(1519) in 16S rRNA + 4 S-adenosyl-L-homocysteine + 4 H(+). Specifically dimethylates two adjacent adenosines (A1518 and A1519) in the loop of a conserved hairpin near the 3'-end of 16S rRNA in the 30S particle. May play a critical role in biogenesis of 30S subunits. The sequence is that of Ribosomal RNA small subunit methyltransferase A from Nostoc punctiforme (strain ATCC 29133 / PCC 73102).